The sequence spans 249 residues: Proteasome activator complex subunit 1 (249 aa).

The disordered stretch occupies residues 60–102 (PLDIPVPDPVKEKEKEERKKQQEKEDKDEKKKGEDEDKGPPCG). The segment covering 68 to 98 (PVKEKEKEERKKQQEKEDKDEKKKGEDEDKG) has biased composition (basic and acidic residues).

The protein belongs to the PA28 family. Heterodimer of PSME1 and PSME2, which forms a hexameric ring. PSME1 can form homoheptamers.

Implicated in immunoproteasome assembly and required for efficient antigen processing. The PA28 activator complex enhances the generation of class I binding peptides by altering the cleavage pattern of the proteasome. The chain is Proteasome activator complex subunit 1 (PSME1) from Sus scrofa (Pig).